Reading from the N-terminus, the 1365-residue chain is ATP-dependent RNA helicase DHX29 (1365 aa).

The segment covering 1–10 (MGGKNKKHKA) has biased composition (basic residues). Disordered regions lie at residues 1–74 (MGGK…NDSG), 174–222 (SQEF…EETT), and 235–257 (AEQQ…EKFD). 2 stretches are compositionally biased toward low complexity: residues 11–36 (PGAA…VGEA) and 43–53 (ARPAPAVPTGA). A phosphoserine mark is found at serine 69, serine 190, and serine 198. Polar residues predominate over residues 187-203 (KFQSVQIQATLSPPQQT). Residues 206 to 222 (KRQEEDPKIKPKKEETT) are compositionally biased toward basic and acidic residues. The stretch at 281–308 (LEKNKQGQKEAQEKIRKFQREMETLEDH) forms a coiled coil. A disordered region spans residues 500 to 524 (QQQQQQQQRPESEKGGSEDPEESWE). The Helicase ATP-binding domain occupies 581 to 754 (VETLKRHRVV…FTHCPILRIS (174 aa)). Residue 594-601 (GETGSGKS) coordinates ATP. Positions 701 to 704 (DEVH) match the DEAH box motif. In terms of domain architecture, Helicase C-terminal spans 848 to 1025 (LILELLVYLD…ELCLHIMKCD (178 aa)).

Belongs to the DEAD box helicase family. DEAH subfamily. Part of the 43S pre-initiation complex (PIC) that contains at least Met-tRNA, EIF1, EIF1A (EIF1AX or EIF1AY), EIF2S1, EIF2S2, EIF2S3, EIF3A, EIF3B, EIF3C, EIF3D, EIF3E, EIF3F, EIF3G, EIF3H, EIF3I, EIF3J, EIF3K, EIF3L, EIF3M, DHX29 and the 40S ribosomal subunit.

Its subcellular location is the cytoplasm. It carries out the reaction ATP + H2O = ADP + phosphate + H(+). Its function is as follows. ATP-binding RNA helicase involved in translation initiation. Part of the 43S pre-initiation complex that is required for efficient initiation on mRNAs of higher eukaryotes with structured 5'-UTRs by promoting efficient NTPase-dependent 48S complex formation. Specifically binds to the 40S ribosome near the mRNA entrance. Does not possess a processive helicase activity. The chain is ATP-dependent RNA helicase DHX29 from Mus musculus (Mouse).